We begin with the raw amino-acid sequence, 438 residues long: Adenylyltransferase and sulfurtransferase MOCS3 (438 aa).

Residues G80, D101, 108-112 (TNLHR), K125, and 169-170 (DN) each bind ATP. Zn(2+) is bound by residues C210 and C213. Residue C227 is the Glycyl thioester intermediate; for adenylyltransferase activity of the active site. Residues C285 and C288 each coordinate Zn(2+). The 102-residue stretch at 335–436 (SKQRHVLVDV…WTRNVDKEFP (102 aa)) folds into the Rhodanese domain. C392 (cysteine persulfide intermediate; for sulfurtransferase activity) is an active-site residue.

This sequence in the N-terminal section; belongs to the HesA/MoeB/ThiF family. UBA4 subfamily. It depends on Zn(2+) as a cofactor.

The protein resides in the cytoplasm. It localises to the cytosol. The catalysed reaction is [molybdopterin-synthase sulfur-carrier protein]-C-terminal Gly-Gly + ATP + H(+) = [molybdopterin-synthase sulfur-carrier protein]-C-terminal Gly-Gly-AMP + diphosphate. The enzyme catalyses [molybdopterin-synthase sulfur-carrier protein]-C-terminal Gly-Gly-AMP + S-sulfanyl-L-cysteinyl-[cysteine desulfurase] + AH2 = [molybdopterin-synthase sulfur-carrier protein]-C-terminal-Gly-aminoethanethioate + L-cysteinyl-[cysteine desulfurase] + A + AMP + 2 H(+). The protein operates within tRNA modification; 5-methoxycarbonylmethyl-2-thiouridine-tRNA biosynthesis. It functions in the pathway cofactor biosynthesis; molybdopterin biosynthesis. Plays a central role in 2-thiolation of mcm(5)S(2)U at tRNA wobble positions of cytosolic tRNA(Lys), tRNA(Glu) and tRNA(Gln). Also essential during biosynthesis of the molybdenum cofactor. Acts by mediating the C-terminal thiocarboxylation of sulfur carriers URM1 and MOCS2A. Its N-terminus first activates URM1 and MOCS2A as acyl-adenylates (-COAMP), then the persulfide sulfur on the catalytic cysteine is transferred to URM1 and MOCS2A to form thiocarboxylation (-COSH) of their C-terminus. The reaction probably involves hydrogen sulfide that is generated from the persulfide intermediate and that acts as a nucleophile towards URM1 and MOCS2A. Subsequently, a transient disulfide bond is formed. Does not use thiosulfate as sulfur donor; NFS1 probably acting as a sulfur donor for thiocarboxylation reactions. The chain is Adenylyltransferase and sulfurtransferase MOCS3 from Culex quinquefasciatus (Southern house mosquito).